The following is a 121-amino-acid chain: Small ribosomal subunit protein uS13 (121 aa).

A disordered region spans residues 94–121 (GLPVRGQNTKNNSRTRKGPRRTVANKKK). The segment covering 106 to 121 (SRTRKGPRRTVANKKK) has biased composition (basic residues).

It belongs to the universal ribosomal protein uS13 family. Part of the 30S ribosomal subunit. Forms a loose heterodimer with protein S19. Forms two bridges to the 50S subunit in the 70S ribosome.

Located at the top of the head of the 30S subunit, it contacts several helices of the 16S rRNA. In the 70S ribosome it contacts the 23S rRNA (bridge B1a) and protein L5 of the 50S subunit (bridge B1b), connecting the 2 subunits; these bridges are implicated in subunit movement. Contacts the tRNAs in the A and P-sites. This Exiguobacterium sibiricum (strain DSM 17290 / CCUG 55495 / CIP 109462 / JCM 13490 / 255-15) protein is Small ribosomal subunit protein uS13.